Reading from the N-terminus, the 418-residue chain is Gene 68 protein (418 aa).

Disordered stretches follow at residues 230-304 and 353-418; these read IPAP…IHTL and DTFE…ERRA. Positions 241-250 are enriched in basic and acidic residues; it reads RPSEGGDARP. Residues 257-266 are compositionally biased toward basic residues; that stretch reads SRARSVHGRR. Over residues 353-369 the composition is skewed to basic and acidic residues; that stretch reads DTFEDNRRDELRHDDSR. Positions 395–404 are enriched in basic residues; the sequence is PHLRRSRGRG.

It belongs to the herpesviridae US2 family.

The chain is Gene 68 protein from Equine herpesvirus 1 (strain Ab4p) (EHV-1).